Here is a 439-residue protein sequence, read N- to C-terminus: tRNA modification GTPase MnmE (439 aa).

Residues Arg26, Glu88, and Arg127 each contribute to the (6S)-5-formyl-5,6,7,8-tetrahydrofolate site. A TrmE-type G domain is found at 220–367 (GARLALIGRP…LRDAIHTALI (148 aa)). Asn230 contacts K(+). GTP contacts are provided by residues 230 to 235 (NAGKSS), 249 to 255 (TPIPGTT), and 274 to 277 (DTAG). Ser234 provides a ligand contact to Mg(2+). K(+) contacts are provided by Thr249, Ile251, and Thr254. A Mg(2+)-binding site is contributed by Thr255. Lys439 serves as a coordination point for (6S)-5-formyl-5,6,7,8-tetrahydrofolate.

This sequence belongs to the TRAFAC class TrmE-Era-EngA-EngB-Septin-like GTPase superfamily. TrmE GTPase family. Homodimer. Heterotetramer of two MnmE and two MnmG subunits. Requires K(+) as cofactor.

The protein localises to the cytoplasm. Exhibits a very high intrinsic GTPase hydrolysis rate. Involved in the addition of a carboxymethylaminomethyl (cmnm) group at the wobble position (U34) of certain tRNAs, forming tRNA-cmnm(5)s(2)U34. The sequence is that of tRNA modification GTPase MnmE from Deinococcus geothermalis (strain DSM 11300 / CIP 105573 / AG-3a).